The following is a 1040-amino-acid chain: Multidrug resistance protein MdtB (1040 aa).

The next 12 helical transmembrane spans lie at 16 to 36 (FIMR…AGII), 347 to 367 (LMMA…NIPA), 369 to 389 (IIPG…MVFL), 396 to 416 (LTLM…IVVI), 440 to 460 (IGFT…PLLF), 472 to 492 (FAIT…TLTP), 537 to 557 (WLTL…WVFI), 863 to 883 (LGST…VLGI), 888 to 908 (FIHP…ALLA), 911 to 931 (IAGS…IGIV), 968 to 988 (ILMT…STGV), and 998 to 1018 (IGMV…TPVI).

The protein belongs to the resistance-nodulation-cell division (RND) (TC 2.A.6) family. MdtB subfamily. Part of a tripartite efflux system composed of MdtA, MdtB and MdtC. MdtB forms a heteromultimer with MdtC.

Its subcellular location is the cell inner membrane. Functionally, the MdtABC tripartite complex confers resistance against novobiocin and deoxycholate. The sequence is that of Multidrug resistance protein MdtB from Escherichia coli O7:K1 (strain IAI39 / ExPEC).